A 704-amino-acid chain; its full sequence is Probable serine/threonine-protein kinase WNK1 (704 aa).

The Protein kinase domain occupies 27 to 284 (GRYNDVLGKG…ARELLKDPFL (258 aa)). ATP contacts are provided by residues 107 to 110 (TEMF) and lysine 157. Aspartate 174 serves as the catalytic Proton acceptor. Residues 499 to 521 (QTDLQDSGGSSDDGGGQTQHVKD) are disordered.

Belongs to the protein kinase superfamily. Ser/Thr protein kinase family. WNK subfamily.

The enzyme catalyses L-seryl-[protein] + ATP = O-phospho-L-seryl-[protein] + ADP + H(+). The catalysed reaction is L-threonyl-[protein] + ATP = O-phospho-L-threonyl-[protein] + ADP + H(+). The polypeptide is Probable serine/threonine-protein kinase WNK1 (WNK1) (Oryza sativa subsp. japonica (Rice)).